The primary structure comprises 228 residues: Ribonuclease 3 (228 aa).

The 123-residue stretch at 5–127 folds into the RNase III domain; sequence LMALQARLQH…VIGAVYLDAG (123 aa). Glu-40 contacts Mg(2+). The active site involves Asp-44. Residues Asp-113 and Glu-116 each contribute to the Mg(2+) site. The active site involves Glu-116. Residues 154–224 enclose the DRBM domain; it reads DPKTELQEWL…AAAMLQTLKA (71 aa).

It belongs to the ribonuclease III family. As to quaternary structure, homodimer. Mg(2+) serves as cofactor.

Its subcellular location is the cytoplasm. It carries out the reaction Endonucleolytic cleavage to 5'-phosphomonoester.. Its function is as follows. Digests double-stranded RNA. Involved in the processing of primary rRNA transcript to yield the immediate precursors to the large and small rRNAs (23S and 16S). Processes some mRNAs, and tRNAs when they are encoded in the rRNA operon. Processes pre-crRNA and tracrRNA of type II CRISPR loci if present in the organism. This is Ribonuclease 3 from Albidiferax ferrireducens (strain ATCC BAA-621 / DSM 15236 / T118) (Rhodoferax ferrireducens).